Here is a 285-residue protein sequence, read N- to C-terminus: Iron uptake system component EfeM (285 aa).

A signal peptide spans Met-1–Ala-34.

The protein belongs to the EfeM/EfeO family. Component of the iron transporter efeUOB/M complex composed of EfeU, EfeM and EfeB.

Its subcellular location is the periplasm. In terms of biological role, part of the iron transporter system efeUOB/M involved in iron import. Specifically binds Fe(3+), which is produced by EfeB-mediated oxidation of Fe(2+), and delivers it to the cell inner membrane permease EfeU. Also binds Zn(2+) and Cu(2+) in vitro. This chain is Iron uptake system component EfeM, found in Pseudomonas syringae pv. syringae (strain B728a).